The primary structure comprises 248 residues: Functional amyloid sbunit FapE (248 aa).

A signal peptide spans 1-20 (MNTSRWLTALCLAASMPAYA).

Belongs to the FapE family. As to quaternary structure, a minor component of purified amyloid fibrils. Fibrils are resistant to boiling in 2% (weight/vol) SDS and require &gt;90% (vol/vol) formic acid to dissolve.

It localises to the fimbrium. The protein resides in the secreted. In terms of biological role, a minor component of the functional amyloid in this bacterium. Upon overexpression of the endogenous six-gene locus (fapA-fapF) in situ, cells form large clumps during liquid growth, make large amounts of biofilm and produce amyloid fibrils. Expression of the 6 gene operon in E.coli strain BL21(DE3) induces flocculation and biofilm formation with copious extracellular fibrils. The chain is Functional amyloid sbunit FapE from Pseudomonas fluorescens.